Here is an 820-residue protein sequence, read N- to C-terminus: DNA gyrase subunit A (820 aa).

The region spanning 31-496 (IPDVRDGLKP…TLTNIEIEDL (466 aa)) is the Topo IIA-type catalytic domain. The O-(5'-phospho-DNA)-tyrosine intermediate role is filled by Tyr119. The GyrA-box signature appears at 523–529 (QRRGGKG).

The protein belongs to the type II topoisomerase GyrA/ParC subunit family. In terms of assembly, heterotetramer, composed of two GyrA and two GyrB chains. In the heterotetramer, GyrA contains the active site tyrosine that forms a transient covalent intermediate with DNA, while GyrB binds cofactors and catalyzes ATP hydrolysis.

It is found in the cytoplasm. The enzyme catalyses ATP-dependent breakage, passage and rejoining of double-stranded DNA.. Its function is as follows. A type II topoisomerase that negatively supercoils closed circular double-stranded (ds) DNA in an ATP-dependent manner to modulate DNA topology and maintain chromosomes in an underwound state. Negative supercoiling favors strand separation, and DNA replication, transcription, recombination and repair, all of which involve strand separation. Also able to catalyze the interconversion of other topological isomers of dsDNA rings, including catenanes and knotted rings. Type II topoisomerases break and join 2 DNA strands simultaneously in an ATP-dependent manner. This is DNA gyrase subunit A from Lawsonia intracellularis (strain PHE/MN1-00).